The primary structure comprises 252 residues: Cell division protein ZapD (252 aa).

This sequence belongs to the ZapD family. In terms of assembly, interacts with FtsZ.

The protein localises to the cytoplasm. Cell division factor that enhances FtsZ-ring assembly. Directly interacts with FtsZ and promotes bundling of FtsZ protofilaments, with a reduction in FtsZ GTPase activity. This is Cell division protein ZapD from Ralstonia pickettii (strain 12J).